The chain runs to 177 residues: Large ribosomal subunit protein uL6 (177 aa).

It belongs to the universal ribosomal protein uL6 family. In terms of assembly, part of the 50S ribosomal subunit.

Its function is as follows. This protein binds to the 23S rRNA, and is important in its secondary structure. It is located near the subunit interface in the base of the L7/L12 stalk, and near the tRNA binding site of the peptidyltransferase center. The sequence is that of Large ribosomal subunit protein uL6 from Shewanella baltica (strain OS223).